Here is a 306-residue protein sequence, read N- to C-terminus: MVAIIVHGGAGTIRKEERIPKIIEGVREAVLTGWRELKKGSALDAVEEAVKVLEDNPLFNAGTGSVLTLDGKVEMDAAIMRGKTLDAGAVAGIWGVKNPISVARKVMEKTDHVLLIGEGAVKFARLMGFPEYDPTTEERRKQWEELRKKLLETGEIRHWKKLSELIKEYPEVLRSTVGAVAFDGEEIVAGTSTGGVFLKMFGRVGDTPIIGAGTYANEVAGASCTGLGEVAIKLSLAKTATDFVRLGLDAQAASEAAIRLATKYFGPDTMGIIMVDSNGNVGFAKNTKHMSYAFMKEGMKEPEAGV.

The active-site Nucleophile is the Thr-176. Substrate contacts are provided by residues 203-206 and 225-228; these read RVGD and TGLG.

This sequence belongs to the Ntn-hydrolase family. In terms of assembly, heterotetramer of two alpha and two beta chains arranged as a dimer of alpha/beta heterodimers. Post-translationally, autocleaved. Generates the alpha and beta subunits. The N-terminal residue of the beta subunit is thought to be responsible for the nucleophile hydrolase activity.

It carries out the reaction L-asparagine + H2O = L-aspartate + NH4(+). Its function is as follows. Catalyzes the hydrolysis of L-asparagine into L-aspartate and ammonia. In Pyrococcus furiosus (strain ATCC 43587 / DSM 3638 / JCM 8422 / Vc1), this protein is Plant-type L-asparaginase.